Here is a 343-residue protein sequence, read N- to C-terminus: UDP-3-O-acylglucosamine N-acyltransferase (343 aa).

The active-site Proton acceptor is the His-248.

It belongs to the transferase hexapeptide repeat family. LpxD subfamily. As to quaternary structure, homotrimer.

It catalyses the reaction a UDP-3-O-[(3R)-3-hydroxyacyl]-alpha-D-glucosamine + a (3R)-hydroxyacyl-[ACP] = a UDP-2-N,3-O-bis[(3R)-3-hydroxyacyl]-alpha-D-glucosamine + holo-[ACP] + H(+). Its pathway is bacterial outer membrane biogenesis; LPS lipid A biosynthesis. Catalyzes the N-acylation of UDP-3-O-acylglucosamine using 3-hydroxyacyl-ACP as the acyl donor. Is involved in the biosynthesis of lipid A, a phosphorylated glycolipid that anchors the lipopolysaccharide to the outer membrane of the cell. The polypeptide is UDP-3-O-acylglucosamine N-acyltransferase (Microcystis aeruginosa (strain NIES-843 / IAM M-2473)).